The sequence spans 166 residues: Cold-inducible RNA-binding protein B (166 aa).

The 79-residue stretch at 5-83 (GKLFIGGLNF…RQIRVDQAGK (79 aa)) folds into the RRM domain. A disordered region spans residues 68–166 (GKAVDGRQIR…DSYDSYATHE (99 aa)). A compositionally biased stretch (gly residues) spans 92–115 (YRGGSSGGRGFFRGGRGRGGGDRG). Residues 133-149 (GSRDYYSSGRSQGSYGD) show a composition bias toward low complexity. Over residues 157–166 (DSYDSYATHE) the composition is skewed to basic and acidic residues.

In terms of assembly, interacts with prmt1. Interacts with elavl1/elrA (via RRM3). Associates with ribosomes. Post-translationally, methylated on arginine residues within RGG motifs. Methylation by prmt1 promotes cytoplasmic accumulation. In terms of tissue distribution, in adults, most abundant in testis, ovary, brain and liver, with lower expression in kidney and heart.

It is found in the nucleus. The protein localises to the nucleoplasm. The protein resides in the cytoplasm. Functionally, cold-inducible mRNA binding protein. Acts cooperatively with elavl1/elrA to stabilize AU-rich element (ARE)-containing mRNAs by binding to them and inhibiting their deadenylation. Essential for embryonic gastrulation and neural development, acting to maintain the expression of a set of adhesion molecules, and cell movement during embryogenesis. Required for pronephros development. This is Cold-inducible RNA-binding protein B (cirbp-b) from Xenopus laevis (African clawed frog).